Consider the following 277-residue polypeptide: Protein EURL homolog (277 aa).

The segment at 173–201 (LGLWPGERPQNREQRDSRQRRHSGHSREE) is disordered. Residues 197–229 (HSREELMRKNVEELRQLNEQLLLQIQNVFEELS) are a coiled coil.

Belongs to the EURL family.

Functionally, plays a role in cortical progenitor cell proliferation and differentiation. May promote dendritic spine development of post-migratory cortical projection neurons by modulating the beta-catenin signaling pathway. This is Protein EURL homolog from Danio rerio (Zebrafish).